We begin with the raw amino-acid sequence, 954 residues long: uncharacterized protein (954 aa).

A signal peptide spans 1-35; that stretch reads MKILFNNTFELFCLFVFVTWALFLNNNGILYPVHC. Residues 381 to 415 adopt a coiled-coil conformation; it reads KNKISSARDDIQKDINKMESELINVSNEINRLDIV. Residues 733-765 are disordered; sequence NIRNDNNNNNNNNNNNSNNNNNNNNNNKDNSVA. The span at 736 to 763 shows a compositional bias: low complexity; sequence NDNNNNNNNNNNNSNNNNNNNNNNKDNS.

This is an uncharacterized protein from Plasmodium falciparum (isolate 3D7).